The sequence spans 192 residues: Urease accessory protein UreE (192 aa).

The interval 170 to 192 is disordered; that stretch reads EHHGHSHSHSHDHVHDEKCGHKH. The segment covering 178–192 has biased composition (basic and acidic residues); it reads HSHDHVHDEKCGHKH.

This sequence belongs to the UreE family.

The protein localises to the cytoplasm. Its function is as follows. Involved in urease metallocenter assembly. Binds nickel. Probably functions as a nickel donor during metallocenter assembly. This is Urease accessory protein UreE from Cupriavidus necator (strain ATCC 17699 / DSM 428 / KCTC 22496 / NCIMB 10442 / H16 / Stanier 337) (Ralstonia eutropha).